The primary structure comprises 554 residues: Phospholipase B-like protein E (554 aa).

A signal peptide spans 1–19 (MKLFILLIVIVFLISNSYS). N-linked (GlcNAc...) asparagine glycosylation is found at asparagine 113, asparagine 140, asparagine 231, asparagine 302, asparagine 340, and asparagine 546.

The protein belongs to the phospholipase B-like family.

Its subcellular location is the secreted. In terms of biological role, probable phospholipase. The sequence is that of Phospholipase B-like protein E (plbE) from Dictyostelium discoideum (Social amoeba).